A 400-amino-acid polypeptide reads, in one-letter code: Golgin-45 (400 aa).

Residues 1–16 are compositionally biased toward polar residues; that stretch reads MTTKNLETKVTVTSSP. Residues 1–58 form a disordered region; it reads MTTKNLETKVTVTSSPIRGAGDGMETEEPPKSVEVTSGVQSRKHHSLQSPWKKAVPSE. Serine 15 carries the phosphoserine modification. A Tankyrase-binding motif motif is present at residues 18-22; the sequence is RGAGD. Position 49 is a phosphoserine (serine 49). Residues 120-213 are a coiled coil; that stretch reads NKELSEVKNV…QLERMSIQCD (94 aa). Residue threonine 348 is modified to Phosphothreonine. Serine 353 is subject to Phosphoserine. The tract at residues 394–400 is essential for interaction with GORASP2; that stretch reads RGELIAL.

In terms of assembly, interacts with GORASP2. Interacts with the GTP-bound form of RAB2, but not with other Golgi Rab proteins. Identified in a complex with RAB2 and GORASP2. In terms of processing, ADP-ribosylated by tankyrase TNKS and TNKS2. Poly-ADP-ribosylated protein is recognized by RNF146, followed by ubiquitination. Ubiquitinated by RNF146 when poly-ADP-ribosylated, leading to its degradation. Detected in adrenal gland.

Its subcellular location is the golgi apparatus membrane. The protein localises to the nucleus. It is found in the cytoplasm. Functionally, required for normal Golgi structure and for protein transport from the endoplasmic reticulum (ER) through the Golgi apparatus to the cell surface. This is Golgin-45 (BLZF1) from Homo sapiens (Human).